The sequence spans 188 residues: Transmembrane protein 160 (188 aa).

The transit peptide at 1 to 96 directs the protein to the mitochondrion; that stretch reads MGGGWWWARA…ISFMQSDMGR (96 aa). The interval 25-52 is disordered; that stretch reads PPRPRSGGARGSFAPGHGPRAGASPPPV. Residues 29-38 are compositionally biased toward low complexity; it reads RSGGARGSFA. Position 48 is a phosphoserine (serine 48). 2 helical membrane passes run 102-122 and 135-155; these read FFLLGGLCVVWGGASYVVGLA and AAAGVGAVLAAGLLWACAVGL.

The protein belongs to the TMEM160 family.

The protein localises to the mitochondrion inner membrane. The chain is Transmembrane protein 160 from Bos taurus (Bovine).